The primary structure comprises 161 residues: Allophycocyanin alpha-B chain (161 aa).

Asn71 bears the N4-methylasparagine mark. (2R,3E)-phycocyanobilin is bound at residue Cys81.

It belongs to the phycobiliprotein family. Post-translationally, contains one covalently linked bilin chromophore.

The protein localises to the plastid. Its subcellular location is the chloroplast thylakoid membrane. Its function is as follows. Allophycocyanin is a photosynthetic bile pigment-protein complex with maximum absorption at approximately 650 nanometers. The chain is Allophycocyanin alpha-B chain (apcD) from Pyropia yezoensis (Susabi-nori).